The primary structure comprises 262 residues: Hemin import ATP-binding protein HmuV (262 aa).

The 240-residue stretch at 2–241 (IRASDISVRL…ETMEAVFGCR (240 aa)) folds into the ABC transporter domain. 34-41 (GPNGSGKT) contacts ATP.

This sequence belongs to the ABC transporter superfamily. Heme (hemin) importer (TC 3.A.1.14.5) family. In terms of assembly, the complex is composed of two ATP-binding proteins (HmuV), two transmembrane proteins (HmuU) and a solute-binding protein (HmuT).

The protein localises to the cell inner membrane. Functionally, part of the ABC transporter complex HmuTUV involved in hemin import. Responsible for energy coupling to the transport system. The protein is Hemin import ATP-binding protein HmuV of Rhizobium meliloti (strain 1021) (Ensifer meliloti).